The chain runs to 556 residues: Formate--tetrahydrofolate ligase (556 aa).

65–72 lines the ATP pocket; that stretch reads TPAGEGKS.

This sequence belongs to the formate--tetrahydrofolate ligase family.

It catalyses the reaction (6S)-5,6,7,8-tetrahydrofolate + formate + ATP = (6R)-10-formyltetrahydrofolate + ADP + phosphate. Its pathway is one-carbon metabolism; tetrahydrofolate interconversion. This chain is Formate--tetrahydrofolate ligase, found in Streptococcus suis (strain 98HAH33).